A 727-amino-acid chain; its full sequence is Cyclin-T1 (727 aa).

Ser117 is modified (phosphoserine). The Nuclear localization signal signature appears at 253–270 (KRIWNWRAWQADRKTKAD). Residue Lys343 forms a Glycyl lysine isopeptide (Lys-Gly) (interchain with G-Cter in SUMO2) linkage. Ser389 carries the post-translational modification Phosphoserine. The stretch at 389–420 (SLKEYRAKHAEELAAQKRQLENMEANVKSQYA) forms a coiled coil. Lys391 is subject to N6-acetyllysine. Lys416 participates in a covalent cross-link: Glycyl lysine isopeptide (Lys-Gly) (interchain with G-Cter in SUMO2). Residues Ser417 and Ser475 each carry the ADP-ribosylserine modification. The histidine-rich domain (HRD) stretch occupies residues 481 to 551 (IKMRIKVHTA…RLGDPKHSSQ (71 aa)). Residue Lys482 forms a Glycyl lysine isopeptide (Lys-Gly) (interchain with G-Cter in SUMO2) linkage. Lys486 carries the post-translational modification N6-(ADP-ribosyl)lysine. Positions 487-507 (VHTAADKHNSVDDSVTKNREH) are enriched in basic and acidic residues. Disordered regions lie at residues 487 to 631 (VHTA…QPSC) and 691 to 727 (YMNPRAGGMSSRSGNTDKPRPPPLPSEPPPPLPPLPK). At His488 the chain carries ADP-ribosylhistidine. Residues Ser496 and Ser500 each carry the phosphoserine modification. Positions 508–531 (KEKHKTHPSNHHHHHNHHSHKHSH) are enriched in basic residues. Residue His531 is modified to ADP-ribosylhistidine. Residues Ser532, Ser550, and Ser553 each carry the ADP-ribosylserine modification. His557 carries the post-translational modification ADP-ribosylhistidine. Residues 561 to 571 (SLSSSFSSSSS) are compositionally biased toward low complexity. Ser564 carries the post-translational modification ADP-ribosylserine. Ser565 is modified (phosphoserine). A compositionally biased stretch (polar residues) spans 616–631 (GHSSDTSGLHFSQPSC). Residues 711–727 (PPPLPSEPPPPLPPLPK) are compositionally biased toward pro residues.

It belongs to the cyclin family. Cyclin C subfamily. As to quaternary structure, cyclin-T1 is the predominant cyclin that associates with CDK9 to form a heterodimer called P-TEFb. P-TEFb forms a complex with AFF4/AF5Q31. Component of a complex which is at least composed of HTATSF1/Tat-SF1, P-TEFb complex, RNA pol II, SUPT5H, and NCL/nucleolin. Component of the 7SK snRNP complex at least composed of P-TEFb (composed of CDK9 and CCNT1/cyclin-T1), HEXIM1, HEXIM2, BCDIN3, SART3 proteins and 7SK and U6 snRNAs. Interacts (via central region) with ZMYND8 (via N-terminus); the interaction is direct and the association appears to occur between homodimeric ZMYND8 and the activated form of the P-TEFb complex. Interacts with BRD4, targets chromatin binding. Interacts with JMJD6. Interacts with MDFIC. Interacts with HSF1. Interacts with HTATSF1. Interacts with TBX21. (Microbial infection) Binds to BIV Tat, however Tat binds TAR RNA in a Cyc-T1-independent mode. Post-translationally, ADP-ribosylation on serine residues by PARP1 in response to DNA damage disrupts the phase separation activity of CCNT1, thereby preventing activation of CDK9.

It localises to the nucleus. In terms of biological role, regulatory subunit of the cyclin-dependent kinase pair (CDK9/cyclin-T1) complex, also called positive transcription elongation factor B (P-TEFb), which facilitates the transition from abortive to productive elongation by phosphorylating the CTD (C-terminal domain) of the large subunit of RNA polymerase II (RNA Pol II). Required to activate the protein kinase activity of CDK9: acts by mediating formation of liquid-liquid phase separation (LLPS) that enhances binding of P-TEFb to the CTD of RNA Pol II. This chain is Cyclin-T1 (CCNT1), found in Bos taurus (Bovine).